Reading from the N-terminus, the 944-residue chain is MSDYKSTLNLPETGFPMRGDLAKREPGMLARWTDDDLYGIIRAAKKGKKTFILHDGPPYANGSIHIGHSVNKILKDIIVKSKGLSGFDSPYVPGWDCHGLPIELKVEQEFGKPGEKFTAAEFRAKCREYAATQVDGQRKDFIRLGVLGDWSHPYLTMDFKTEANIIRALGRIIKNGHLHKGAKPVHWCVDCRSALAEAEVEYYDKTSPSIDVAFRAVDQDAVKAKFGLPGVSGPVSLVIWTTTPWTLPANRAISLAPDFDYALVQIDGQAVILAKDLVESVMQRIGAAEYTILGTVKGAELELLRFTHPFMGFDVPAILGDHVTLDAGTGAVHTAPGHGPDDYVIGQKYGLETANPVGPDGAYLPGTYPTLDGVNVFKANDIVIELLKEKGALLHVEKMQHSYPCCWRHKTPIIFRATPQWFVSMDKEGLRQQSLKEIKGVQWIPDWGQARIESMVANRPDWCISRQRTWGVPMSLFVHKETQELLPIERTLAAMEEVAKRVEVDGIQAWWDLDPKEILGEDADQYEKVPDTLDVWFDSGSTSYSVVDARPEFAGHAADMYLEGSDQHRGWFMSSLMISVAMKGKAPYRQVLTHGFTVDGQGRKMSKSIGNTVSPQDVMNKLGADILRLWVASTDYTGEMAVSDEILKRAADSYRRIRNTARFLLANLNGFNPATDMVKPEEMVVLDRWAVGCAKTAQQEILKAYEAYDFHEVVQRLMRFCSVEMGSFYLDIIKDRQYTAKADSVARRSCQTALYHIAEALVRWMAPIMSFTADEIWGYLPGEREKYVFTGEWYDGLFGLEENEEFNDAFWDDVRYIKDQVNKELENQKANGIKSNLEAKVTLKYADDANGTIKKLKLLGEEVRFIFITSQFVISEQAGGIDDENIQYNAGNTTVQAVVTRAEGDKCPRCWHYTTDVGKVAEHADICGRCVSNIAGNGEQRKFA.

The 'HIGH' region motif lies at 58–68 (PYANGSIHIGH). L-isoleucyl-5'-AMP is bound at residue glutamate 563. Positions 604–608 (KMSKS) match the 'KMSKS' region motif. Lysine 607 lines the ATP pocket. Positions 907, 910, 927, and 930 each coordinate Zn(2+).

It belongs to the class-I aminoacyl-tRNA synthetase family. IleS type 1 subfamily. In terms of assembly, monomer. The cofactor is Zn(2+).

It is found in the cytoplasm. It carries out the reaction tRNA(Ile) + L-isoleucine + ATP = L-isoleucyl-tRNA(Ile) + AMP + diphosphate. Functionally, catalyzes the attachment of isoleucine to tRNA(Ile). As IleRS can inadvertently accommodate and process structurally similar amino acids such as valine, to avoid such errors it has two additional distinct tRNA(Ile)-dependent editing activities. One activity is designated as 'pretransfer' editing and involves the hydrolysis of activated Val-AMP. The other activity is designated 'posttransfer' editing and involves deacylation of mischarged Val-tRNA(Ile). The chain is Isoleucine--tRNA ligase from Salmonella choleraesuis (strain SC-B67).